The following is a 129-amino-acid chain: Small ribosomal subunit protein uS12 (129 aa).

Belongs to the universal ribosomal protein uS12 family. As to quaternary structure, part of the 30S ribosomal subunit. Contacts proteins S8 and S17. May interact with IF1 in the 30S initiation complex.

Its function is as follows. With S4 and S5 plays an important role in translational accuracy. Interacts with and stabilizes bases of the 16S rRNA that are involved in tRNA selection in the A site and with the mRNA backbone. Located at the interface of the 30S and 50S subunits, it traverses the body of the 30S subunit contacting proteins on the other side and probably holding the rRNA structure together. The combined cluster of proteins S8, S12 and S17 appears to hold together the shoulder and platform of the 30S subunit. This is Small ribosomal subunit protein uS12 from Rickettsia typhi (strain ATCC VR-144 / Wilmington).